Here is a 410-residue protein sequence, read N- to C-terminus: L-sorbose 1-phosphate reductase (410 aa).

Residues Cys40, His69, and Glu70 each contribute to the Zn(2+) site. NAD(+) contacts are provided by residues Arg221 and 309–310 (GT).

This sequence belongs to the zinc-containing alcohol dehydrogenase family. Requires Zn(2+) as cofactor.

Reduces L-sorbose 1-phosphate to D-glucitol 6-phosphate. This chain is L-sorbose 1-phosphate reductase (sorE), found in Klebsiella pneumoniae.